Reading from the N-terminus, the 166-residue chain is Endoribonuclease YbeY (166 aa).

Positions 111, 115, and 121 each coordinate Zn(2+). A disordered region spans residues 140 to 166 (ELGYPDPYADDESADPPHSDTPSKDHE). The segment covering 154–166 (DPPHSDTPSKDHE) has biased composition (basic and acidic residues).

Belongs to the endoribonuclease YbeY family. Zn(2+) serves as cofactor.

It is found in the cytoplasm. Functionally, single strand-specific metallo-endoribonuclease involved in late-stage 70S ribosome quality control and in maturation of the 3' terminus of the 16S rRNA. This is Endoribonuclease YbeY from Pseudomonas syringae pv. syringae (strain B728a).